Here is a 178-residue protein sequence, read N- to C-terminus: Cytochrome b6-f complex iron-sulfur subunit (178 aa).

A helical transmembrane segment spans residues 20 to 42 (LLTFGTATGVALGALYPVANYFM). In terms of domain architecture, Rieske spans 65 to 161 (KTGWLATHQA…VDIEDDAVLV (97 aa)). [2Fe-2S] cluster is bound by residues cysteine 107, histidine 109, cysteine 125, and histidine 128. The cysteines at positions 112 and 127 are disulfide-linked.

This sequence belongs to the Rieske iron-sulfur protein family. The 4 large subunits of the cytochrome b6-f complex are cytochrome b6, subunit IV (17 kDa polypeptide, PetD), cytochrome f and the Rieske protein, while the 4 small subunits are PetG, PetL, PetM and PetN. The complex functions as a dimer. The cofactor is [2Fe-2S] cluster.

It is found in the cellular thylakoid membrane. The enzyme catalyses 2 oxidized [plastocyanin] + a plastoquinol + 2 H(+)(in) = 2 reduced [plastocyanin] + a plastoquinone + 4 H(+)(out). In terms of biological role, component of the cytochrome b6-f complex, which mediates electron transfer between photosystem II (PSII) and photosystem I (PSI), cyclic electron flow around PSI, and state transitions. The sequence is that of Cytochrome b6-f complex iron-sulfur subunit from Prochlorococcus marinus (strain AS9601).